Reading from the N-terminus, the 365-residue chain is UDP-N-acetylglucosamine--N-acetylmuramyl-(pentapeptide) pyrophosphoryl-undecaprenol N-acetylglucosamine transferase (365 aa).

Residues 12–14 (TGG), Asn-128, Arg-169, Ser-195, and Gln-296 each bind UDP-N-acetyl-alpha-D-glucosamine.

The protein belongs to the glycosyltransferase 28 family. MurG subfamily.

Its subcellular location is the cell inner membrane. It catalyses the reaction di-trans,octa-cis-undecaprenyl diphospho-N-acetyl-alpha-D-muramoyl-L-alanyl-D-glutamyl-meso-2,6-diaminopimeloyl-D-alanyl-D-alanine + UDP-N-acetyl-alpha-D-glucosamine = di-trans,octa-cis-undecaprenyl diphospho-[N-acetyl-alpha-D-glucosaminyl-(1-&gt;4)]-N-acetyl-alpha-D-muramoyl-L-alanyl-D-glutamyl-meso-2,6-diaminopimeloyl-D-alanyl-D-alanine + UDP + H(+). The protein operates within cell wall biogenesis; peptidoglycan biosynthesis. Its function is as follows. Cell wall formation. Catalyzes the transfer of a GlcNAc subunit on undecaprenyl-pyrophosphoryl-MurNAc-pentapeptide (lipid intermediate I) to form undecaprenyl-pyrophosphoryl-MurNAc-(pentapeptide)GlcNAc (lipid intermediate II). In Gluconobacter oxydans (strain 621H) (Gluconobacter suboxydans), this protein is UDP-N-acetylglucosamine--N-acetylmuramyl-(pentapeptide) pyrophosphoryl-undecaprenol N-acetylglucosamine transferase.